The sequence spans 565 residues: Sulfite reductase [NADPH] hemoprotein beta-component (565 aa).

[4Fe-4S] cluster is bound by residues Cys429, Cys435, Cys474, and Cys478. Residue Cys478 coordinates siroheme.

The protein belongs to the nitrite and sulfite reductase 4Fe-4S domain family. As to quaternary structure, alpha(8)-beta(8). The alpha component is a flavoprotein, the beta component is a hemoprotein. The cofactor is siroheme. [4Fe-4S] cluster serves as cofactor.

It catalyses the reaction hydrogen sulfide + 3 NADP(+) + 3 H2O = sulfite + 3 NADPH + 4 H(+). The protein operates within sulfur metabolism; hydrogen sulfide biosynthesis; hydrogen sulfide from sulfite (NADPH route): step 1/1. Its function is as follows. Component of the sulfite reductase complex that catalyzes the 6-electron reduction of sulfite to sulfide. This is one of several activities required for the biosynthesis of L-cysteine from sulfate. This is Sulfite reductase [NADPH] hemoprotein beta-component from Shewanella putrefaciens (strain CN-32 / ATCC BAA-453).